The primary structure comprises 291 residues: MSPVKVFGHPMLTNVARVLLFLEEVGAEYELVPVDFVAGEHKRPQHVQLNPFAKMPGFQDGESLHIKSRAIAKYILRKYGGTAGLDLLGENSGIEELAMVDVWTEVEAQQYYPAISPVVFECIIIPFIIPGGGAAPNQTVVDESLERLRGVLGIYEARLEKSRYLAGDSISFADLNHIPFTFYFMTTPYAKVFDEYPKVKAWWEMLMARPAVQRVCKHMPTEFKLRARTRCLCTPRGCVPCRAGDDPTQEKRPPSRGWVIICPSTSSIPFQFQQHEESACASARASPDSLL.

One can recognise a GST N-terminal domain in the interval 2–83; the sequence is SPVKVFGHPM…YILRKYGGTA (82 aa). Residues 41 to 42, 54 to 55, and 67 to 68 each bind glutathione; these read HK, KM, and KS. One can recognise a GST C-terminal domain in the interval 93 to 223; that stretch reads GIEELAMVDV…RVCKHMPTEF (131 aa).

Belongs to the GST superfamily. Phi family.

The enzyme catalyses RX + glutathione = an S-substituted glutathione + a halide anion + H(+). Its function is as follows. Conjugation of reduced glutathione to a wide number of exogenous and endogenous hydrophobic electrophiles. This Triticum aestivum (Wheat) protein is Glutathione S-transferase 2 (GSTA2).